A 434-amino-acid chain; its full sequence is MQVSVETTQGLGRRVTITVAADSIEKAVKSELVKAAKNVRIDGFRKGHVPMNIVEQRYGASVRQDVLGDLMQRNFVDAIIKEKINPAGAPNYVPGEYKQGEDFTYSVEFEVYPEVELKDLESIEVEKPVVEVNDADVDTMLETLRKQQATWKETDAAATAEDRATLDFTGSIDGEEFEGGKATDFVLAMGQGRMIPGFEEGVIGHKAGEEFTIDVNFPEDYHAENLKGKSAKFAIVLKKVEVRELPELTEEFIKRFGVADGSLAGLRAEVRKNMERELKGAVRNRVKTQAIDGLVSANNIDVPTALVDGEIDVLRRQAAQRFGGNEKQAAELPRELFEEQAKRRVVVGLLLGEVISQHELKADEDRVKALIEEMASAYEDPQEVIEFYSKNKELMNNMRNVALEEQAVETLLAKAKVTEKPTTFSELMNQTTAA.

The 86-residue stretch at 161–246 (EDRATLDFTG…LKKVEVRELP (86 aa)) folds into the PPIase FKBP-type domain.

Belongs to the FKBP-type PPIase family. Tig subfamily.

Its subcellular location is the cytoplasm. It carries out the reaction [protein]-peptidylproline (omega=180) = [protein]-peptidylproline (omega=0). Involved in protein export. Acts as a chaperone by maintaining the newly synthesized protein in an open conformation. Functions as a peptidyl-prolyl cis-trans isomerase. This is Trigger factor from Yersinia pseudotuberculosis serotype O:1b (strain IP 31758).